The chain runs to 60 residues: Conotoxin Cal6.30 (60 aa).

Residues 1–22 (MKVTCVLTLAVLILTIGQIANA) form the signal peptide. 3 cysteine pairs are disulfide-bonded: C31-C47, C38-C51, and C46-C55.

Expressed by the venom duct.

Its subcellular location is the secreted. Probable neurotoxin. The polypeptide is Conotoxin Cal6.30 (Californiconus californicus (California cone)).